Consider the following 32-residue polypeptide: ilv operon leader peptide (32 aa).

This Edwardsiella tarda protein is ilv operon leader peptide (ilvL).